The following is a 265-amino-acid chain: tRNA (guanine-N(1)-)-methyltransferase (265 aa).

S-adenosyl-L-methionine is bound by residues Gly110 and 129–134 (LGDFVM). Positions 243–265 (LAAWGAPPPPLPKRRRGAKPNPN) are disordered. Residues 254–265 (PKRRRGAKPNPN) are compositionally biased toward basic residues.

Belongs to the RNA methyltransferase TrmD family. Homodimer.

It is found in the cytoplasm. It carries out the reaction guanosine(37) in tRNA + S-adenosyl-L-methionine = N(1)-methylguanosine(37) in tRNA + S-adenosyl-L-homocysteine + H(+). In terms of biological role, specifically methylates guanosine-37 in various tRNAs. This chain is tRNA (guanine-N(1)-)-methyltransferase, found in Deinococcus geothermalis (strain DSM 11300 / CIP 105573 / AG-3a).